A 229-amino-acid chain; its full sequence is Ribonuclease 3 (229 aa).

The region spanning 5 to 127 (LDRLERKLGY…LIGAIYQDAD (123 aa)) is the RNase III domain. Mg(2+) is bound at residue Glu-40. Asp-44 is an active-site residue. Residues Asp-113 and Glu-116 each contribute to the Mg(2+) site. The active site involves Glu-116. Positions 154-224 (DPKTRLQEFL…AAAALIALGV (71 aa)) constitute a DRBM domain.

Belongs to the ribonuclease III family. In terms of assembly, homodimer. The cofactor is Mg(2+).

The protein resides in the cytoplasm. The enzyme catalyses Endonucleolytic cleavage to 5'-phosphomonoester.. Its function is as follows. Digests double-stranded RNA. Involved in the processing of primary rRNA transcript to yield the immediate precursors to the large and small rRNAs (23S and 16S). Processes some mRNAs, and tRNAs when they are encoded in the rRNA operon. Processes pre-crRNA and tracrRNA of type II CRISPR loci if present in the organism. The sequence is that of Ribonuclease 3 from Pseudomonas entomophila (strain L48).